Here is a 310-residue protein sequence, read N- to C-terminus: Putative S-adenosyl-L-methionine-dependent methyltransferase MUL_2766 (310 aa).

S-adenosyl-L-methionine contacts are provided by residues Asp131 and 160–161 (DL).

The protein belongs to the UPF0677 family.

Functionally, exhibits S-adenosyl-L-methionine-dependent methyltransferase activity. The polypeptide is Putative S-adenosyl-L-methionine-dependent methyltransferase MUL_2766 (Mycobacterium ulcerans (strain Agy99)).